The chain runs to 405 residues: Peroxisomal membrane protein PEX13 (405 aa).

The span at Met1–Pro11 shows a compositional bias: pro residues. A disordered region spans residues Met1–Asn71. The Peroxisomal matrix portion of the chain corresponds to Met1–Glu136. A compositionally biased stretch (polar residues) spans Pro61 to Asn71. The helical transmembrane segment at Ser137–Tyr157 threads the bilayer. The tract at residues Met147 to Ser235 is targeting to peroxisomes. Residues Asn158–His176 lie on the Cytoplasmic side of the membrane. The helical transmembrane segment at Phe177–Tyr194 threads the bilayer. The tract at residues Phe177–Gln198 is interaction with PEX19. Over Arg195–Ser235 the chain is Peroxisomal matrix. The helical transmembrane segment at Trp236–Leu256 threads the bilayer. Topologically, residues Ser257–Leu405 are cytoplasmic. Residues Asp274 to Lys338 enclose the SH3 domain. Ser356 is modified (phosphoserine).

The protein belongs to the peroxin-13 family. Interacts (via SH3 domain) with PEX14 (via SH3-binding motif); forming the PEX13-PEX14 docking complex. Interacts with PEX19.

It is found in the peroxisome membrane. In terms of biological role, component of the PEX13-PEX14 docking complex, a translocon channel that specifically mediates the import of peroxisomal cargo proteins bound to PEX5 receptor. The PEX13-PEX14 docking complex forms a large import pore which can be opened to a diameter of about 9 nm. Mechanistically, PEX5 receptor along with cargo proteins associates with the PEX14 subunit of the PEX13-PEX14 docking complex in the cytosol, leading to the insertion of the receptor into the organelle membrane with the concomitant translocation of the cargo into the peroxisome matrix. Involved in the import of PTS1- and PTS2-type containing proteins. The protein is Peroxisomal membrane protein PEX13 of Mus musculus (Mouse).